The following is a 580-amino-acid chain: RuBisCO large subunit-binding protein subunit alpha, chloroplastic (580 aa).

The segment covering 1-17 has biased composition (polar residues); that stretch reads MAQSQLAKGSRQTTGRP. Residues 1–24 form a disordered region; sequence MAQSQLAKGSRQTTGRPFQNKPAR.

The protein belongs to the chaperonin (HSP60) family. Oligomer of probably six alpha and six beta subunits.

Its subcellular location is the plastid. It is found in the chloroplast. Functionally, this protein binds RuBisCO small and large subunits and is implicated in the assembly of the enzyme oligomer. The polypeptide is RuBisCO large subunit-binding protein subunit alpha, chloroplastic (Chlamydomonas reinhardtii (Chlamydomonas smithii)).